The chain runs to 329 residues: Acetyl-coenzyme A carboxylase carboxyl transferase subunit alpha (329 aa).

Positions 40-294 constitute a CoA carboxyltransferase C-terminal domain; sequence QLETLAARRR…REALERNLSE (255 aa).

The protein belongs to the AccA family. In terms of assembly, acetyl-CoA carboxylase is a heterohexamer composed of biotin carboxyl carrier protein (AccB), biotin carboxylase (AccC) and two subunits each of ACCase subunit alpha (AccA) and ACCase subunit beta (AccD).

The protein localises to the cytoplasm. The catalysed reaction is N(6)-carboxybiotinyl-L-lysyl-[protein] + acetyl-CoA = N(6)-biotinyl-L-lysyl-[protein] + malonyl-CoA. It participates in lipid metabolism; malonyl-CoA biosynthesis; malonyl-CoA from acetyl-CoA: step 1/1. Component of the acetyl coenzyme A carboxylase (ACC) complex. First, biotin carboxylase catalyzes the carboxylation of biotin on its carrier protein (BCCP) and then the CO(2) group is transferred by the carboxyltransferase to acetyl-CoA to form malonyl-CoA. The polypeptide is Acetyl-coenzyme A carboxylase carboxyl transferase subunit alpha (Synechococcus sp. (strain CC9311)).